Reading from the N-terminus, the 184-residue chain is Guanylate kinase (184 aa).

One can recognise a Guanylate kinase-like domain in the interval 5 to 183 (KKLIIITGPS…TVKEVLKIIK (179 aa)). 12–19 (GPSGVGKG) provides a ligand contact to ATP.

Belongs to the guanylate kinase family.

Its subcellular location is the cytoplasm. The enzyme catalyses GMP + ATP = GDP + ADP. Functionally, essential for recycling GMP and indirectly, cGMP. This Prochlorococcus marinus subsp. pastoris (strain CCMP1986 / NIES-2087 / MED4) protein is Guanylate kinase.